The chain runs to 297 residues: 2,3,4,5-tetrahydropyridine-2,6-dicarboxylate N-succinyltransferase (297 aa).

Asp-148 and Glu-165 together coordinate Mg(2+). The active-site Acyl-anhydride intermediate is the Glu-181. Residues Arg-183, Gly-198, Ser-201, Ala-224, 239–240 (EA), Gly-247, Lys-258, and 271–274 (RRDS) each bind succinyl-CoA.

It belongs to the type 2 tetrahydrodipicolinate N-succinyltransferase family. Homotrimer.

The protein resides in the cytoplasm. It carries out the reaction (S)-2,3,4,5-tetrahydrodipicolinate + succinyl-CoA + H2O = (S)-2-succinylamino-6-oxoheptanedioate + CoA. The protein operates within amino-acid biosynthesis; L-lysine biosynthesis via DAP pathway; LL-2,6-diaminopimelate from (S)-tetrahydrodipicolinate (succinylase route): step 1/3. Functionally, catalyzes the conversion of the cyclic tetrahydrodipicolinate (THDP) into the acyclic N-succinyl-L-2-amino-6-oxopimelate using succinyl-CoA. The polypeptide is 2,3,4,5-tetrahydropyridine-2,6-dicarboxylate N-succinyltransferase (Corynebacterium glutamicum (strain ATCC 13032 / DSM 20300 / JCM 1318 / BCRC 11384 / CCUG 27702 / LMG 3730 / NBRC 12168 / NCIMB 10025 / NRRL B-2784 / 534)).